The following is a 235-amino-acid chain: RAD9, HUS1, RAD1-interacting nuclear orphan protein 1 (235 aa).

A Phosphoserine modification is found at Ser-50. Residues Ser-54–Phe-60 carry the RAD1-binding motif motif. Positions Ser-66–Leu-106 are disordered. Positions Pro-69–Thr-87 are enriched in basic residues. The segment covering Glu-96–Leu-106 has biased composition (low complexity). The D-box signature appears at Arg-123 to Phe-130. The disordered stretch occupies residues Gln-156 to Asp-198. Basic and acidic residues predominate over residues Val-162–Glu-173. The KEN box motif lies at Gln-171–Ser-175.

As to quaternary structure, interacts (when phosphorylated by PLK1) with POLQ; promoting POLQ recruitment to DNA damage sites. Interacts with RAD1; interaction is direct and promotes association with the 9-1-1 (RAD9-RAD1-HUS1) complex. Interacts with RAD18. Interacts with TOPBP1. Interacts with UBE2N. Phosphorylated at Ser-50 by PLK1, promoting interaction with polymerase theta (POLQ). In terms of processing, ubiquitinated and degraded by the APC/C complex upon mitotic exit.

The protein resides in the nucleus. It localises to the chromosome. Its function is as follows. Involved in microhomology-mediated end-joining (MMEJ) DNA repair by promoting recruitment of polymerase theta (POLQ) to DNA damage sites during mitosis. MMEJ is an alternative non-homologous end-joining (NHEJ) machinery that takes place during mitosis to repair double-strand breaks in DNA that originate in S-phase. Accumulates in M-phase; following phosphorylation by PLK1, interacts with POLQ, enabling its recruitment to double-strand breaks for subsequent repair. Also involved in the DNA damage response (DDR) signaling in response to genotoxic stresses such as ionizing radiation (IR) during the S phase. Recruited to sites of DNA damage through interaction with the 9-1-1 cell-cycle checkpoint response complex and TOPBP1 in a ATR-dependent manner. Required for the progression of the G1 to S phase transition. Plays a role in the stimulation of CHEK1 phosphorylation. This is RAD9, HUS1, RAD1-interacting nuclear orphan protein 1 (Rhno1) from Rattus norvegicus (Rat).